Consider the following 474-residue polypeptide: tRNA-2-methylthio-N(6)-dimethylallyladenosine synthase (474 aa).

One can recognise an MTTase N-terminal domain in the interval 3–120; the sequence is KKLHIKTWGC…LPEMLNHVQG (118 aa). Positions 12, 49, 83, 157, 161, and 164 each coordinate [4Fe-4S] cluster. The 233-residue stretch at 143 to 375 folds into the Radical SAM core domain; it reads RAEGPTAFVS…QDRINQQVLQ (233 aa). The region spanning 378–441 is the TRAM domain; that stretch reads RRMLGTVQRI…TNSLRGTVVR (64 aa).

It belongs to the methylthiotransferase family. MiaB subfamily. As to quaternary structure, monomer. [4Fe-4S] cluster is required as a cofactor.

It localises to the cytoplasm. The enzyme catalyses N(6)-dimethylallyladenosine(37) in tRNA + (sulfur carrier)-SH + AH2 + 2 S-adenosyl-L-methionine = 2-methylsulfanyl-N(6)-dimethylallyladenosine(37) in tRNA + (sulfur carrier)-H + 5'-deoxyadenosine + L-methionine + A + S-adenosyl-L-homocysteine + 2 H(+). Catalyzes the methylthiolation of N6-(dimethylallyl)adenosine (i(6)A), leading to the formation of 2-methylthio-N6-(dimethylallyl)adenosine (ms(2)i(6)A) at position 37 in tRNAs that read codons beginning with uridine. The chain is tRNA-2-methylthio-N(6)-dimethylallyladenosine synthase from Serratia proteamaculans (strain 568).